A 147-amino-acid polypeptide reads, in one-letter code: UPF0306 protein KPN78578_35330 (147 aa).

It belongs to the UPF0306 family.

This Klebsiella pneumoniae subsp. pneumoniae (strain ATCC 700721 / MGH 78578) protein is UPF0306 protein KPN78578_35330.